The primary structure comprises 341 residues: Anthranilate phosphoribosyltransferase (341 aa).

5-phospho-alpha-D-ribose 1-diphosphate is bound by residues Gly-83, Ser-91, 93–96 (NTST), 111–115 (KHGNR), and Ser-123. Gly-83 contributes to the anthranilate binding site. Mg(2+) is bound at residue Ser-95. Anthranilate is bound at residue Asn-114. Arg-169 is an anthranilate binding site. The Mg(2+) site is built by Asp-228 and Glu-229.

The protein belongs to the anthranilate phosphoribosyltransferase family. Homodimer. Requires Mg(2+) as cofactor.

It catalyses the reaction N-(5-phospho-beta-D-ribosyl)anthranilate + diphosphate = 5-phospho-alpha-D-ribose 1-diphosphate + anthranilate. It participates in amino-acid biosynthesis; L-tryptophan biosynthesis; L-tryptophan from chorismate: step 2/5. In terms of biological role, catalyzes the transfer of the phosphoribosyl group of 5-phosphorylribose-1-pyrophosphate (PRPP) to anthranilate to yield N-(5'-phosphoribosyl)-anthranilate (PRA). The protein is Anthranilate phosphoribosyltransferase of Hyphomonas neptunium (strain ATCC 15444).